The following is a 497-amino-acid chain: Cytochrome P450 2D6 (497 aa).

Position 301 (aspartate 301) interacts with substrate. Cysteine 443 contacts heme.

The protein belongs to the cytochrome P450 family. The cofactor is heme.

The protein localises to the endoplasmic reticulum membrane. Its subcellular location is the microsome membrane. It catalyses the reaction (5Z,8Z,11Z,14Z)-eicosatetraenoate + reduced [NADPH--hemoprotein reductase] + O2 = (8R,9S)-epoxy-(5Z,11Z,14Z)-eicosatrienoate + oxidized [NADPH--hemoprotein reductase] + H2O + H(+). It carries out the reaction (5Z,8Z,11Z,14Z)-eicosatetraenoate + reduced [NADPH--hemoprotein reductase] + O2 = (11R,12S)-epoxy-(5Z,8Z,14Z)-eicosatrienoate + oxidized [NADPH--hemoprotein reductase] + H2O + H(+). The catalysed reaction is (5Z,8Z,11Z,14Z)-eicosatetraenoate + reduced [NADPH--hemoprotein reductase] + O2 = (14S,15R)-epoxy-(5Z,8Z,11Z)-eicosatrienoate + oxidized [NADPH--hemoprotein reductase] + H2O + H(+). The enzyme catalyses N-(5Z,8Z,11Z,14Z-eicosatetraenoyl)-ethanolamine + reduced [NADPH--hemoprotein reductase] + O2 = N-(8,9-epoxy-5Z,11Z,14Z-eicosatrienoyl)-ethanolamine + oxidized [NADPH--hemoprotein reductase] + H2O + H(+). It catalyses the reaction N-(5Z,8Z,11Z,14Z-eicosatetraenoyl)-ethanolamine + reduced [NADPH--hemoprotein reductase] + O2 = N-(11,12-epoxy-5Z,8Z,14Z-eicosatrienoyl)-ethanolamine + oxidized [NADPH--hemoprotein reductase] + H2O + H(+). It carries out the reaction N-(5Z,8Z,11Z,14Z-eicosatetraenoyl)-ethanolamine + reduced [NADPH--hemoprotein reductase] + O2 = N-(14,15-epoxy-5Z,8Z,11Z-eicosatrienoyl)-ethanolamine + oxidized [NADPH--hemoprotein reductase] + H2O + H(+). The catalysed reaction is N-(5Z,8Z,11Z,14Z-eicosatetraenoyl)-ethanolamine + reduced [NADPH--hemoprotein reductase] + O2 = N-(20-hydroxy-5Z,8Z,11Z,14Z-eicosatetraenoyl)-ethanolamine + oxidized [NADPH--hemoprotein reductase] + H2O + H(+). The enzyme catalyses (5Z,8Z,11Z,14Z,17Z)-eicosapentaenoate + reduced [NADPH--hemoprotein reductase] + O2 = (17S,18R)-epoxy-(5Z,8Z,11Z,14Z)-eicosatetraenoate + oxidized [NADPH--hemoprotein reductase] + H2O + H(+). It catalyses the reaction (4Z,7Z,10Z,13Z,16Z,19Z)-docosahexaenoate + reduced [NADPH--hemoprotein reductase] + O2 = (19R,20S)-epoxy-(4Z,7Z,10Z,13Z,16Z)-docosapentaenoate + oxidized [NADPH--hemoprotein reductase] + H2O + H(+). It carries out the reaction (4Z,7Z,10Z,13Z,16Z,19Z)-docosahexaenoate + reduced [NADPH--hemoprotein reductase] + O2 = (19S,20R)-epoxy-(4Z,7Z,10Z,13Z,16Z)-docosapentaenoate + oxidized [NADPH--hemoprotein reductase] + H2O + H(+). The catalysed reaction is cholesterol + reduced [NADPH--hemoprotein reductase] + O2 = 25-hydroxycholesterol + oxidized [NADPH--hemoprotein reductase] + H2O + H(+). The enzyme catalyses all-trans-retinol + reduced [NADPH--hemoprotein reductase] + O2 = all-trans-retinal + oxidized [NADPH--hemoprotein reductase] + 2 H2O + H(+). It functions in the pathway cofactor metabolism; retinol metabolism. The protein operates within lipid metabolism; fatty acid metabolism. It participates in steroid metabolism; cholesterol metabolism. Functionally, a cytochrome P450 monooxygenase involved in the metabolism of fatty acids, steroids and retinoids. Mechanistically, uses molecular oxygen inserting one oxygen atom into a substrate, and reducing the second into a water molecule, with two electrons provided by NADPH via cytochrome P450 reductase (NADPH--hemoprotein reductase). Catalyzes the epoxidation of double bonds of polyunsaturated fatty acids (PUFA). Metabolizes endocannabinoid arachidonoylethanolamide (anandamide) to 20-hydroxyeicosatetraenoic acid ethanolamide (20-HETE-EA) and 8,9-, 11,12-, and 14,15-epoxyeicosatrienoic acid ethanolamides (EpETrE-EAs), potentially modulating endocannabinoid system signaling. Catalyzes the hydroxylation of carbon-hydrogen bonds. Metabolizes cholesterol toward 25-hydroxycholesterol, a physiological regulator of cellular cholesterol homeostasis. Catalyzes the oxidative transformations of all-trans retinol to all-trans retinal, a precursor for the active form all-trans-retinoic acid. Also involved in the oxidative metabolism of drugs such as antiarrhythmics, adrenoceptor antagonists, and tricyclic antidepressants. This is Cytochrome P450 2D6 (CYP2D6) from Pan troglodytes (Chimpanzee).